The chain runs to 135 residues: Transcriptional activator protein (135 aa).

The Nuclear localization signal signature appears at 17-32 (KVQHKIAKKKPIRRKR). The segment at 37-54 (CGCSYYLHLNCNNHGFTH) is a zinc-finger region. Composition is skewed to polar residues over residues 77–87 (LFQDNRTQPEA) and 101–115 (IQPQ…SQMF). The disordered stretch occupies residues 77–117 (LFQDNRTQPEAISNEPRHHFHSDKIQPQHQEGNGDSQMFSR). The interval 120–135 (NLDDITASDWSFLKSI) is transactivation.

This sequence belongs to the geminiviridae transcriptional activator protein family. Monomer. Homodimer. Homooligomer. Self-interaction correlates with nuclear localization and efficient activation of transcription. Monomers suppress local silencing by interacting with and inactivating host adenosine kinase 2 (ADK2) in the cytoplasm. Interacts with and inhibits host SNF1 kinase. Binds to ssDNA. May interact with host RPS27A. Post-translationally, phosphorylated.

It is found in the host nucleus. The protein resides in the host cytoplasm. In terms of biological role, multifunctional protein that modulates host antiviral defenses and promotes host attractiveness to insect vectors. Acts as a suppressor of RNA-mediated gene silencing, also known as post-transcriptional gene silencing (PTGS), a mechanism of plant viral defense that limits the accumulation of viral RNAs. TrAP suppresses the host RNA silencing by inhibiting adenosine kinase 2 (ADK2), a kinase involved in a general methylation pathway. Also suppresses the host basal defense by interacting with and inhibiting SNF1 kinase, a key regulator of cell metabolism implicated in innate antiviral defense. Its function is as follows. Inhibits signal transduction by the phytohormone jasmonate, making the infected plant more attractive to aphids, which are the second host to play a role as a dissemination vector. Acts by binding to ubiquitin precursor RPS27A, thereby preventing ubiquitin degradation of JAZ. This chain is Transcriptional activator protein, found in Tomato yellow leaf curl virus (strain Israel) (TYLCV).